A 243-amino-acid polypeptide reads, in one-letter code: 1-(5-phosphoribosyl)-5-[(5-phosphoribosylamino)methylideneamino] imidazole-4-carboxamide isomerase (243 aa).

Asp8 serves as the catalytic Proton acceptor. Asp129 acts as the Proton donor in catalysis.

This sequence belongs to the HisA/HisF family.

The protein resides in the cytoplasm. It carries out the reaction 1-(5-phospho-beta-D-ribosyl)-5-[(5-phospho-beta-D-ribosylamino)methylideneamino]imidazole-4-carboxamide = 5-[(5-phospho-1-deoxy-D-ribulos-1-ylimino)methylamino]-1-(5-phospho-beta-D-ribosyl)imidazole-4-carboxamide. It functions in the pathway amino-acid biosynthesis; L-histidine biosynthesis; L-histidine from 5-phospho-alpha-D-ribose 1-diphosphate: step 4/9. This chain is 1-(5-phosphoribosyl)-5-[(5-phosphoribosylamino)methylideneamino] imidazole-4-carboxamide isomerase, found in Brucella suis biovar 1 (strain 1330).